The primary structure comprises 393 residues: Phosphoglycerate kinase (393 aa).

Residues 22–24, Arg-37, 60–63, Arg-119, and Arg-152 contribute to the substrate site; these read DFN and HLGR. Residues Lys-202, Gly-293, Glu-324, and 350-353 each bind ATP; that span reads GGDS.

The protein belongs to the phosphoglycerate kinase family. Monomer.

The protein localises to the cytoplasm. The enzyme catalyses (2R)-3-phosphoglycerate + ATP = (2R)-3-phospho-glyceroyl phosphate + ADP. It functions in the pathway carbohydrate degradation; glycolysis; pyruvate from D-glyceraldehyde 3-phosphate: step 2/5. The sequence is that of Phosphoglycerate kinase from Borrelia garinii subsp. bavariensis (strain ATCC BAA-2496 / DSM 23469 / PBi) (Borreliella bavariensis).